The primary structure comprises 364 residues: Dihydroorotate dehydrogenase (quinone) (364 aa).

FMN-binding positions include 62–66 (AGFDK) and T86. Substrate is bound at residue K66. Position 111 to 115 (111 to 115 (NRMGF)) interacts with substrate. Residues N142 and N175 each coordinate FMN. N175 is a binding site for substrate. Catalysis depends on S178, which acts as the Nucleophile. N180 provides a ligand contact to substrate. Residues K216 and T244 each contribute to the FMN site. Residue 245-246 (NT) participates in substrate binding. FMN-binding positions include G267, G296, and 317-318 (YT).

It belongs to the dihydroorotate dehydrogenase family. Type 2 subfamily. Monomer. The cofactor is FMN.

Its subcellular location is the cell membrane. It carries out the reaction (S)-dihydroorotate + a quinone = orotate + a quinol. Its pathway is pyrimidine metabolism; UMP biosynthesis via de novo pathway; orotate from (S)-dihydroorotate (quinone route): step 1/1. In terms of biological role, catalyzes the conversion of dihydroorotate to orotate with quinone as electron acceptor. The protein is Dihydroorotate dehydrogenase (quinone) of Anaeromyxobacter dehalogenans (strain 2CP-C).